A 118-amino-acid polypeptide reads, in one-letter code: Cobalt transport protein CbiN (118 aa).

Helical transmembrane passes span 7-27 (INALLLLAVAALAVLPLVLGL) and 70-90 (SALFALQAALGAGVLAYYFGL). A disordered region spans residues 99-118 (ERASAASGAAAAPGDAPEGD). Low complexity predominate over residues 102–118 (SAASGAAAAPGDAPEGD).

It belongs to the CbiN family. Forms an energy-coupling factor (ECF) transporter complex composed of an ATP-binding protein (A component, CbiO), a transmembrane protein (T component, CbiQ) and 2 possible substrate-capture proteins (S components, CbiM and CbiN) of unknown stoichimetry.

Its subcellular location is the cell membrane. It functions in the pathway cofactor biosynthesis; adenosylcobalamin biosynthesis. Its function is as follows. Part of the energy-coupling factor (ECF) transporter complex CbiMNOQ involved in cobalt import. This Streptomyces coelicolor (strain ATCC BAA-471 / A3(2) / M145) protein is Cobalt transport protein CbiN.